The following is a 222-amino-acid chain: Kunitz trypsin inhibitor 3 (222 aa).

The N-terminal stretch at 1–23 (MEKLTLSFITLTVLSAIFTAASA) is a signal peptide. N65 is a glycosylation site (N-linked (GlcNAc...) asparagine). Disulfide bonds link C72-C119 and C165-C173. N-linked (GlcNAc...) asparagine glycosylation occurs at N175.

The protein belongs to the protease inhibitor I3 (leguminous Kunitz-type inhibitor) family.

In terms of biological role, exhibits Kunitz trypsin protease inhibitor activity. The sequence is that of Kunitz trypsin inhibitor 3 from Arabidopsis thaliana (Mouse-ear cress).